The primary structure comprises 938 residues: Translation initiation factor IF-2 (938 aa).

Residues D57–E205 show a composition bias toward basic and acidic residues. Residues D57–E350 form a disordered region. Positions T206 to K215 are enriched in acidic residues. The segment covering K248–D259 has biased composition (basic and acidic residues). 2 stretches are compositionally biased toward basic residues: residues K260 to I270 and G285 to P296. Residues I297–Q319 are compositionally biased toward basic and acidic residues. The span at S323–Q333 shows a compositional bias: basic residues. Basic and acidic residues predominate over residues K334–D344. In terms of domain architecture, tr-type G spans T434 to E602. Residues G443–T450 are G1. Residue G443 to T450 coordinates GTP. Positions G468 to H472 are G2. The tract at residues D490–G493 is G3. Residues D490–H494 and N544–D547 contribute to the GTP site. Residues N544–D547 form a G4 region. Residues S580–K582 form a G5 region.

This sequence belongs to the TRAFAC class translation factor GTPase superfamily. Classic translation factor GTPase family. IF-2 subfamily.

The protein resides in the cytoplasm. One of the essential components for the initiation of protein synthesis. Protects formylmethionyl-tRNA from spontaneous hydrolysis and promotes its binding to the 30S ribosomal subunits. Also involved in the hydrolysis of GTP during the formation of the 70S ribosomal complex. This is Translation initiation factor IF-2 from Christiangramia forsetii (strain DSM 17595 / CGMCC 1.15422 / KT0803) (Gramella forsetii).